The primary structure comprises 90 residues: Phosphocarrier protein NPr (90 aa).

One can recognise an HPr domain in the interval 2–90 (TQYRRVAIKN…ALFESGFDED (89 aa)). The Pros-phosphohistidine intermediate role is filled by H16.

It belongs to the HPr family.

It is found in the cytoplasm. Component of the phosphoenolpyruvate-dependent nitrogen-metabolic phosphotransferase system (nitrogen-metabolic PTS), that seems to be involved in regulating nitrogen metabolism. The phosphoryl group from phosphoenolpyruvate (PEP) is transferred to the phosphoryl carrier protein NPr by enzyme I-Ntr. Phospho-NPr then transfers it to EIIA-Ntr. Could function in the transcriptional regulation of sigma-54 dependent operons in conjunction with the NPr (PtsO) and EIIA-Ntr (PtsN) proteins. The sequence is that of Phosphocarrier protein NPr (ptsO) from Proteus mirabilis (strain HI4320).